The primary structure comprises 460 residues: Cysteine--tRNA ligase (460 aa).

Cys28 contacts Zn(2+). Residues 30–40 (VTIYDLCHIGH) carry the 'HIGH' region motif. Residues Cys209, His234, and Glu238 each contribute to the Zn(2+) site. The 'KMSKS' region signature appears at 266–270 (KMSKS). Lys269 serves as a coordination point for ATP.

This sequence belongs to the class-I aminoacyl-tRNA synthetase family. As to quaternary structure, monomer. Requires Zn(2+) as cofactor.

It localises to the cytoplasm. It carries out the reaction tRNA(Cys) + L-cysteine + ATP = L-cysteinyl-tRNA(Cys) + AMP + diphosphate. This is Cysteine--tRNA ligase from Vibrio vulnificus (strain YJ016).